The following is a 360-amino-acid chain: Hydroxycarboxylic acid receptor 2 (360 aa).

Residues methionine 1–valine 30 are Extracellular-facing. A helical membrane pass occupies residues leucine 31–phenylalanine 51. Topologically, residues histidine 52–arginine 60 are cytoplasmic. A helical membrane pass occupies residues isoleucine 61–threonine 81. Residues aspartate 82–arginine 98 are Extracellular-facing. Cysteine 97 and cysteine 174 are disulfide-bonded. The helical transmembrane segment at valine 99 to alanine 119 threads the bilayer. Over valine 120–threonine 140 the chain is Cytoplasmic. The helical transmembrane segment at alanine 141–tyrosine 161 threads the bilayer. Over threonine 162–methionine 189 the chain is Extracellular. The helical transmembrane segment at phenylalanine 190–tryptophan 210 threads the bilayer. The Cytoplasmic segment spans residues serine 211–alanine 226. The chain crosses the membrane as a helical span at residues isoleucine 227–valine 247. The Extracellular portion of the chain corresponds to arginine 248–aspartate 270. Residues leucine 271 to tyrosine 291 traverse the membrane as a helical segment. The Cytoplasmic segment spans residues tyrosine 292–arginine 360. Positions asparagine 320–arginine 360 are disordered. Residues asparagine 321–arginine 336 are compositionally biased toward polar residues. The residue at position 325 (serine 325) is a Phosphoserine.

It belongs to the G-protein coupled receptor 1 family. As to expression, expressed in adipose tissue, lung and spleen.

It is found in the cell membrane. Functionally, acts as a high affinity receptor for both nicotinic acid (also known as niacin) and (D)-beta-hydroxybutyrate and mediates increased adiponectin secretion and decreased lipolysis through G(i)-protein-mediated inhibition of adenylyl cyclase. This pharmacological effect requires nicotinic acid doses that are much higher than those provided by a normal diet. Mediates nicotinic acid-induced apoptosis in mature neutrophils. Receptor activation by nicotinic acid results in reduced cAMP levels which may affect activity of cAMP-dependent protein kinase A and phosphorylation of target proteins, leading to neutrophil apoptosis. The rank order of potency for the displacement of nicotinic acid binding is 5-methyl pyrazole-3-carboxylic acid = pyridine-3-acetic acid &gt; acifran &gt; 5-methyl nicotinic acid = acipimox &gt;&gt; nicotinuric acid = nicotinamide. In Rattus norvegicus (Rat), this protein is Hydroxycarboxylic acid receptor 2 (Hcar2).